The primary structure comprises 119 residues: UPF0738 protein BAA_1286 (119 aa).

It belongs to the UPF0738 family.

The protein is UPF0738 protein BAA_1286 of Bacillus anthracis (strain A0248).